A 304-amino-acid chain; its full sequence is Protease HtpX homolog (304 aa).

Transmembrane regions (helical) follow at residues 19–39 (FIVFIIYFLLFFVCYAVVSYF) and 41–61 (LGEIGIIIAFLIVLFTNYYAY). Position 146 (His146) interacts with Zn(2+). Glu147 is a catalytic residue. His150 serves as a coordination point for Zn(2+). 2 consecutive transmembrane segments (helical) span residues 156–176 (VRLQTIAAVMVGLIVILGDGL) and 192–212 (NILGIVSLIIAILAPFLATLL). Zn(2+) is bound at residue Glu221.

It belongs to the peptidase M48B family. It depends on Zn(2+) as a cofactor.

The protein resides in the cell inner membrane. The chain is Protease HtpX homolog from Dictyoglomus turgidum (strain DSM 6724 / Z-1310).